Reading from the N-terminus, the 128-residue chain is Small ribosomal subunit protein bS6 (128 aa).

Positions 105-128 are disordered; sequence AKVTEEEPVEAAPEAKVETTTEEE. The segment covering 117 to 128 has biased composition (basic and acidic residues); sequence PEAKVETTTEEE.

It belongs to the bacterial ribosomal protein bS6 family.

Binds together with bS18 to 16S ribosomal RNA. This is Small ribosomal subunit protein bS6 from Geotalea daltonii (strain DSM 22248 / JCM 15807 / FRC-32) (Geobacter daltonii).